Here is a 251-residue protein sequence, read N- to C-terminus: Triosephosphate isomerase (251 aa).

9 to 11 lines the substrate pocket; the sequence is NWK. His-95 serves as the catalytic Electrophile. Residue Glu-167 is the Proton acceptor of the active site. Residues Gly-173, Ser-213, and 234–235 each bind substrate; that span reads GG. Phosphoserine is present on Ser-213.

The protein belongs to the triosephosphate isomerase family. As to quaternary structure, homodimer.

The protein resides in the cytoplasm. It carries out the reaction D-glyceraldehyde 3-phosphate = dihydroxyacetone phosphate. It functions in the pathway carbohydrate biosynthesis; gluconeogenesis. The protein operates within carbohydrate degradation; glycolysis; D-glyceraldehyde 3-phosphate from glycerone phosphate: step 1/1. In terms of biological role, involved in the gluconeogenesis. Catalyzes stereospecifically the conversion of dihydroxyacetone phosphate (DHAP) to D-glyceraldehyde-3-phosphate (G3P). This chain is Triosephosphate isomerase, found in Bacillus anthracis.